A 518-amino-acid polypeptide reads, in one-letter code: Protein translocase subunit SecD (518 aa).

A run of 6 helical transmembrane segments spans residues 9–29, 361–381, 384–404, 406–426, 452–474, and 486–506; these read IFLSIICTVFAVICALPNFMQ, LIGFIAVCIFMVWSYGVLGLF, IALSLALLYILALLSLFQATL, LPGIAGIILTMGMAVDANVLI, FATILDSNLTTLIVAFLLYIFGV, and IGIISSMFSAIIITKLLIDIW.

This sequence belongs to the SecD/SecF family. SecD subfamily. As to quaternary structure, forms a complex with SecF. Part of the essential Sec protein translocation apparatus which comprises SecA, SecYEG and auxiliary proteins SecDF-YajC and YidC.

The protein resides in the cell inner membrane. Functionally, part of the Sec protein translocase complex. Interacts with the SecYEG preprotein conducting channel. SecDF uses the proton motive force (PMF) to complete protein translocation after the ATP-dependent function of SecA. The polypeptide is Protein translocase subunit SecD (Rickettsia felis (strain ATCC VR-1525 / URRWXCal2) (Rickettsia azadi)).